The following is a 670-amino-acid chain: MEETEKKVATQEGRFFSKMKVFLMSLTCAYLAKSLSGVYMNSMLTQIERQFGIPTSVVGFITGSFEIGNLLLIVFVSYFGRKLHRPIIIGVGCVVMGLGCFLMASPHFLMGRYKYETTISPTSNLSSNSFLCIENRTQTLKPTQDPTECVKEIKSLMWIYVLIGNTMRGIGETPIMPLGISYIEDFAKSENSPLYIGILEMGKIVGPIIGLLLGSFFARVYVDIGSVNTDDLTITPTDTRWVGAWWIGFLVCAGVNILTSIPFFFFPKTLPKKELQDNVDVTKYEKVEKHRERAKKENLGITKDFLPFMKSLCCNPIYMLFSLTSVLQINGFASTFTFLPKYLEQQYGKSTSEAVFLIGVYSLPPVCLGYLISGFIMKKFKITVKKAAYIAFGLSLSEYFIFLCNYLLTCDNFPVAGLTTSYKGVQHPLYGEKNVLADCNTRCSCLTDTWDPVCGDNGLAYMSACLAGCEKSVGTGTNMVFQNCSCIGSSGNSSAVLGLCKKGPECDNKLQYFLIKSVFSSFIFSLAAIPGYMVLLRCVKSEEKSIGVGLHAFFIRLLAGIPAPVYFGALIDRTCLHWGTLKCGQPGACRMYDINRFRHIYLGLPAAVRGSSFLPAVFILILMRKFHFPGDIHSPDTELAEMKLTEKESECTDVCRSPKVENDGELKTKL.

At 1-20 (MEETEKKVATQEGRFFSKMK) the chain is on the cytoplasmic side. The helical transmembrane segment at 21–40 (VFLMSLTCAYLAKSLSGVYM) threads the bilayer. Residues 41–59 (NSMLTQIERQFGIPTSVVG) are Extracellular-facing. Residues 60–80 (FITGSFEIGNLLLIVFVSYFG) traverse the membrane as a helical segment. At 81-86 (RKLHRP) the chain is on the cytoplasmic side. Residues 87-111 (IIIGVGCVVMGLGCFLMASPHFLMG) form a helical membrane-spanning segment. Topologically, residues 112-155 (RYKYETTISPTSNLSSNSFLCIENRTQTLKPTQDPTECVKEIKS) are extracellular. Asn124 and Asn135 each carry an N-linked (GlcNAc...) asparagine glycan. Residues 156 to 184 (LMWIYVLIGNTMRGIGETPIMPLGISYIE) form a helical membrane-spanning segment. Residues 185–203 (DFAKSENSPLYIGILEMGK) lie on the Cytoplasmic side of the membrane. Residues 204–224 (IVGPIIGLLLGSFFARVYVDI) traverse the membrane as a helical segment. At 225-242 (GSVNTDDLTITPTDTRWV) the chain is on the extracellular side. The helical transmembrane segment at 243–267 (GAWWIGFLVCAGVNILTSIPFFFFP) threads the bilayer. Residues 268-311 (KTLPKKELQDNVDVTKYEKVEKHRERAKKENLGITKDFLPFMKS) lie on the Cytoplasmic side of the membrane. Residues 312–333 (LCCNPIYMLFSLTSVLQINGFA) form a helical membrane-spanning segment. The Extracellular segment spans residues 334–353 (STFTFLPKYLEQQYGKSTSE). A helical transmembrane segment spans residues 354 to 377 (AVFLIGVYSLPPVCLGYLISGFIM). The Cytoplasmic portion of the chain corresponds to 378–381 (KKFK). A helical transmembrane segment spans residues 382–405 (ITVKKAAYIAFGLSLSEYFIFLCN). The Extracellular segment spans residues 406 to 513 (YLLTCDNFPV…PECDNKLQYF (108 aa)). The Kazal-like domain occupies 433–488 (KNVLADCNTRCSCLTDTWDPVCGDNGLAYMSACLAGCEKSVGTGTNMVFQNCSCIG). Intrachain disulfides connect Cys439–Cys469, Cys445–Cys465, and Cys454–Cys486. N-linked (GlcNAc...) asparagine glycosylation is found at Asn483 and Asn492. A helical transmembrane segment spans residues 514 to 536 (LIKSVFSSFIFSLAAIPGYMVLL). Over 537–545 (RCVKSEEKS) the chain is Cytoplasmic. The chain crosses the membrane as a helical span at residues 546–571 (IGVGLHAFFIRLLAGIPAPVYFGALI). At 572–605 (DRTCLHWGTLKCGQPGACRMYDINRFRHIYLGLP) the chain is on the extracellular side. Residues 606-623 (AAVRGSSFLPAVFILILM) traverse the membrane as a helical segment. Topologically, residues 624-670 (RKFHFPGDIHSPDTELAEMKLTEKESECTDVCRSPKVENDGELKTKL) are cytoplasmic. Ser634 is subject to Phosphoserine.

The protein belongs to the organo anion transporter (TC 2.A.60) family. In terms of assembly, binds to PDZK1. Interaction with PDZK1 is required for expression on hepatocyte surface. As to expression, highly expressed in liver, and at lower levels in kidney. Not detected in other tissues.

The protein resides in the basolateral cell membrane. It carries out the reaction estrone 3-sulfate(out) + hydrogencarbonate(in) = estrone 3-sulfate(in) + hydrogencarbonate(out). The enzyme catalyses taurocholate(out) + hydrogencarbonate(in) = taurocholate(in) + hydrogencarbonate(out). It catalyses the reaction L-thyroxine(out) = L-thyroxine(in). The catalysed reaction is prostaglandin E2(out) = prostaglandin E2(in). It carries out the reaction 17beta-estradiol 17-O-(beta-D-glucuronate)(out) = 17beta-estradiol 17-O-(beta-D-glucuronate)(in). The enzyme catalyses dehydroepiandrosterone 3-sulfate(out) = dehydroepiandrosterone 3-sulfate(in). Functionally, mediates the Na(+)-independent transport of organic anions such as steroid sulfate conjugates (dehydroepiandrosterone sulfate (DHEAS), 17-beta-glucuronosyl estradiol, estrone-3-sulfate), conjugated (taurocholate) and unconjugated (cholate) bile acids, prostaglandin E2 (PGE2) and L-thyroxine T4. Also capable of transporting sulfobromophthalein (BSP), ouabain and gadoxetate. Hydrogencarbonate/HCO3(-) acts as the probable counteranion that exchanges for organic anions. Shows a pH-sensitive substrate specificity which may be ascribed to the protonation state of the binding site and leads to a stimulation of substrate transport in an acidic microenvironment. The sequence is that of Solute carrier organic anion transporter family member 1A1 from Mus musculus (Mouse).